Reading from the N-terminus, the 195-residue chain is Cytochrome b-245 light chain (195 aa).

The Cytoplasmic portion of the chain corresponds to 2-7; it reads GQIEWA. The chain crosses the membrane as a helical span at residues 8–30; the sequence is MWANEQALASGLILITGGIVATA. The Extracellular portion of the chain corresponds to 31–35; the sequence is GRFTQ. The chain crosses the membrane as a helical span at residues 36–53; it reads WYFGAYSIVAGVFVCLLE. The Cytoplasmic portion of the chain corresponds to 54 to 69; that stretch reads YPRGKRKKGSTMERWG. An intramembrane segment occupies 70 to 80; the sequence is QKYMTAVVKLF. Residues 81-86 are Cytoplasmic-facing; that stretch reads GPFTRN. Residues 87 to 104 traverse the membrane as a helical segment; it reads YYVRAVLHLLLSVPAGFL. Position 105 (leucine 105) is a topological domain, extracellular. A helical transmembrane segment spans residues 106–126; sequence ATILGTACLAIASGIYLLAAV. Topologically, residues 127–195 are cytoplasmic; sequence RGEQWTPIEP…NPIPVTDEVV (69 aa). Residues 134–195 form a disordered region; it reads IEPKPRERPQ…NPIPVTDEVV (62 aa). Threonine 147 bears the Phosphothreonine mark. A Glycyl lysine isopeptide (Lys-Gly) (interchain with G-Cter in ubiquitin) cross-link involves residue lysine 149. Serine 168 is modified (phosphoserine).

It belongs to the p22phox family. As to quaternary structure, component of the phagocyte NADPH oxidase core complex/cytochrome b558 complex, composed of CYBB (heavy chain (beta)) and CYBA (light chain (alpha)). Component of the phagocyte NADPH oxidase complex composed of an obligatory core heterodimer formed by the membrane proteins CYBA and CYBB and the cytosolic regulatory subunits NCF1/p47-phox, NCF2/p67-phox, NCF4/p40-phox and the small GTPase RAC1 or RAC2. Interacts with NCF1 (via SH3 domain). Interacts with SH3PXD2A. Interacts with DUOX1, DUOX2 and TPO. Interacts with NOX4; this interaction mediates superoxide generation. Interacts with calprotectin (S100A8/9). Interacts with GBP7. Interacts with NOXO1. Forms a heterodimer with NOX3 and is essential for activity and cell membrane localization of NOX3. Interacts with NOX1. Post-translationally, phosphorylation at Thr-147 enhances NADPH oxidase activity by promoting NCF1/p47-phox binding. Ubiquitinated at Lys-149 likely by RNF145.

It localises to the cell membrane. Its function is as follows. Subunit of NADPH oxidase complexes that is required for the NADPH oxidase activity that generates, in various cell types, superoxide from molecular oxygen utilizing NADPH as an electron donor. Subunit of the phagocyte NADPH oxidase complex that mediates the transfer of electrons from cytosolic NADPH to O2 to produce the superoxide anion (O2(-)). In the activated complex, electrons are first transferred from NADPH to flavin adenine dinucleotide (FAD) and subsequently transferred via two heme molecules to molecular oxygen, producing superoxide through an outer-sphere reaction. Activation of the NADPH oxidase complex is initiated by the assembly of cytosolic subunits of the NADPH oxidase complex with the core NADPH oxidase complex to form a complex at the plasma membrane or phagosomal membrane. This activation process is initiated by phosphorylation dependent binding of the cytosolic NCF1/p47-phox subunit to the C-terminus of CYBA/p22-phox. Aassociates with NOX3 to form a functional NADPH oxidase constitutively generating superoxide. The protein is Cytochrome b-245 light chain of Homo sapiens (Human).